Consider the following 286-residue polypeptide: Nucleotide-binding protein APL_0334 (286 aa).

Residue 8-15 (GRSGSGKS) coordinates ATP. 56–59 (DIRN) lines the GTP pocket.

Belongs to the RapZ-like family.

Displays ATPase and GTPase activities. This Actinobacillus pleuropneumoniae serotype 5b (strain L20) protein is Nucleotide-binding protein APL_0334.